Consider the following 468-residue polypeptide: Argininosuccinate lyase (468 aa).

The protein belongs to the lyase 1 family. Argininosuccinate lyase subfamily.

It is found in the cytoplasm. It carries out the reaction 2-(N(omega)-L-arginino)succinate = fumarate + L-arginine. The protein operates within amino-acid biosynthesis; L-arginine biosynthesis; L-arginine from L-ornithine and carbamoyl phosphate: step 3/3. The chain is Argininosuccinate lyase from Paraburkholderia phytofirmans (strain DSM 17436 / LMG 22146 / PsJN) (Burkholderia phytofirmans).